The primary structure comprises 88 residues: LYR motif-containing protein 2 (88 aa).

A mitochondrion-targeting transit peptide spans 1 to 19 (MAVSRLPPAALSLKQFLQR).

The protein belongs to the complex I LYR family.

Its subcellular location is the mitochondrion. In terms of biological role, involved in efficient integration of the N-module into mitochondrial respiratory chain complex I. The polypeptide is LYR motif-containing protein 2 (lyrm2) (Danio rerio (Zebrafish)).